A 286-amino-acid chain; its full sequence is Homoserine kinase (286 aa).

78 to 88 provides a ligand contact to ATP; that stretch reads PLARGLGSSSS.

Belongs to the GHMP kinase family. Homoserine kinase subfamily.

The protein localises to the cytoplasm. The enzyme catalyses L-homoserine + ATP = O-phospho-L-homoserine + ADP + H(+). Its pathway is amino-acid biosynthesis; L-threonine biosynthesis; L-threonine from L-aspartate: step 4/5. In terms of biological role, catalyzes the ATP-dependent phosphorylation of L-homoserine to L-homoserine phosphate. The chain is Homoserine kinase from Streptococcus equi subsp. equi (strain 4047).